Here is a 215-residue protein sequence, read N- to C-terminus: Small ribosomal subunit protein uS7 (215 aa).

It belongs to the universal ribosomal protein uS7 family. In terms of assembly, part of the 30S ribosomal subunit.

In terms of biological role, one of the primary rRNA binding proteins, it binds directly to 16S rRNA where it nucleates assembly of the head domain of the 30S subunit. Is located at the subunit interface close to the decoding center. The polypeptide is Small ribosomal subunit protein uS7 (Thermococcus celer).